The primary structure comprises 1154 residues: Caspase recruitment domain-containing protein 11 (1154 aa).

A CARD domain is found at 18–110; it reads EEDALWENVE…ELYKLVTGKE (93 aa). Positions 111–128 are linker; that stretch reads PTRRFSTIVVEEGHEGLT. Residues 130-449 are a coiled coil; sequence FLMNEVIKLQ…KDSNNLDQSL (320 aa). Phosphoserine occurs at positions 448 and 466. Residues 450–666 form an inhibitory domain (ID) region; it reads PRNLPVTIIS…GHVRGPGPSV (217 aa). The tract at residues 460-626 is disordered; sequence QDFGDASPRT…HSSSSSHQSE (167 aa). Over residues 473-484 the composition is skewed to acidic residues; sequence EADDSSTSEESP. Serine 512 carries the post-translational modification Phosphoserine. Basic and acidic residues predominate over residues 518-529; it reads RTSDFQAKGHEE. A compositionally biased stretch (polar residues) spans 534–562; it reads ASPSSCGSLPITNSFTKMQPPRSRSSIMS. Serine 535 is modified (phosphoserine). Residue serine 559 is modified to Phosphoserine; by PKC/PRKCB and PKC/PRKCQ. Over residues 573-587 the composition is skewed to basic and acidic residues; sequence IVRRYKEDAPHRSTV. Phosphoserine is present on serine 593. The span at 614-625 shows a compositional bias: low complexity; the sequence is SSIHSSSSSHQS. Residues serine 644 and serine 652 each carry the phosphoserine; by PKC/PRKCB and PKC/PRKCQ modification. The PDZ domain maps to 667-755; it reads QHTTLNGDSL…PVTLHYKVNH (89 aa). Phosphoserine is present on residues serine 886 and serine 925. A Guanylate kinase-like domain is found at 973–1140; it reads RRRPVLFTPT…LLRVVKDKIG (168 aa).

In terms of assembly, homodimer; disulfide-linked. Homomultimer; polymerizes following activation, forming a nucleating helical template that seeds BCL10-filament formation via a CARD-CARD interaction. Interacts (via CARD domain) with BCL10 (via CARD domain); interaction takes place following CARD11 activation and polymerization, leading to the formation of a filamentous CBM complex assembly. Component of a CBM complex (CARD11-BCL10-MALT1) complex involved in NF-kappa-B activation. Found in a membrane raft complex, at least composed of BCL10, CARD11, DPP4 and IKBKB. Interacts (via PDZ domain) with DPP4 (via cytoplasmic tail). Phosphorylation at Ser-559, Ser-644 and Ser-652 by PRKCB and PRKCQ leads to a shift from an inactive to an active form that activates the NF-kappa-B signaling. As to expression, detected in adult peripheral blood leukocytes, thymus, spleen and liver. Also found in promyelocytic leukemia HL-60 cells, chronic myelogenous leukemia K-562 cells, Burkitt's lymphoma Raji cells and colorectal adenocarcinoma SW480 cells. Not detected in HeLaS3, MOLT-4, A-549 and G431 cells.

The protein localises to the cytoplasm. It localises to the membrane raft. Maintained in an autoinhibited state via homodimerization in which the CARD domain forms an extensive interaction with the adjacent linker and coiled-coil regions. Activation downstream of T-cell receptor (TCR) by phosphorylation by PRKCB and PRKCQ triggers CARD11 homooligomerization and BCL10 recruitment, followed by activation of NF-kappa-B. Functionally, adapter protein that plays a key role in adaptive immune response by transducing the activation of NF-kappa-B downstream of T-cell receptor (TCR) and B-cell receptor (BCR) engagement. Transduces signals downstream TCR or BCR activation via the formation of a multiprotein complex together with BCL10 and MALT1 that induces NF-kappa-B and MAP kinase p38 (MAPK11, MAPK12, MAPK13 and/or MAPK14) pathways. Upon activation in response to TCR or BCR triggering, CARD11 homooligomerizes to form a nucleating helical template that recruits BCL10 via CARD-CARD interaction, thereby promoting polymerization of BCL10 and subsequent recruitment of MALT1: this leads to I-kappa-B kinase (IKK) phosphorylation and degradation, and release of NF-kappa-B proteins for nuclear translocation. Its binding to DPP4 induces T-cell proliferation and NF-kappa-B activation in a T-cell receptor/CD3-dependent manner. Promotes linear ubiquitination of BCL10 by promoting the targeting of BCL10 to RNF31/HOIP. Stimulates the phosphorylation of BCL10. Also activates the TORC1 signaling pathway. This Homo sapiens (Human) protein is Caspase recruitment domain-containing protein 11.